Here is a 330-residue protein sequence, read N- to C-terminus: 2-methyl-6-phytyl-1,4-hydroquinone methyltransferase 1, chloroplastic (330 aa).

Residues 1–45 (MKEMVSSSTFRAPGGLGFLGPSKIGLIPLRNRSGVRSRVKYIAPK) constitute a chloroplast transit peptide. Over 46–295 (CAVSSARPAS…DVEKPVNPFT (250 aa)) the chain is Chloroplast intermembrane. The SAM motif I stretch occupies residues 107 to 116 (VVDVGGGTGF). Positions 152 to 165 (VNIIEGDAEDLPYP) are SAM motif II. The tract at residues 193 to 206 (RVLKLGGVACLIGP) is SAM motif III. A helical transmembrane segment spans residues 296–316 (FIFRFVMGTICASYYVLVPIY). The Stromal portion of the chain corresponds to 317 to 330 (MWMKDQIVPKDQPI).

This sequence belongs to the class I-like SAM-binding methyltransferase superfamily. MPBQ/MBSQ MT family.

Its subcellular location is the plastid. The protein resides in the chloroplast inner membrane. The catalysed reaction is 2-methyl-6-phytyl-1,4-benzene-1,4-diol + S-adenosyl-L-methionine = 2,3-dimethyl-6-phytylbenzene-1,4-diol + S-adenosyl-L-homocysteine + H(+). It catalyses the reaction 2-methyl-6-(all-trans-nonaprenyl)benzene-1,4-diol + S-adenosyl-L-methionine = plastoquinol-9 + S-adenosyl-L-homocysteine + H(+). The enzyme catalyses 6-geranylgeranyl-2-methylbenzene-1,4-diol + S-adenosyl-L-methionine = 6-geranylgeranyl-2,3-dimethylbenzene-1,4-diol + S-adenosyl-L-homocysteine + H(+). The protein operates within cofactor biosynthesis; tocopherol biosynthesis. Its function is as follows. Involved in a key methylation step in both tocopherols (vitamin E) and plastoquinone synthesis. Catalyzes the conversion of 2-methyl-6-phytyl-1,4-hydroquinone (MPBQ) to 2,3-dimethyl-6-phytyl-1,4-hydroquinone (DMPQ, a substrate for tocopherol cyclase), and 2-methyl-6-solanyl-1,4-benzoquinone (MSBQ) to plastoquinone. This Oryza sativa subsp. japonica (Rice) protein is 2-methyl-6-phytyl-1,4-hydroquinone methyltransferase 1, chloroplastic (ARSM2).